The chain runs to 505 residues: Succinyl-CoA:acetate CoA-transferase (505 aa).

269 to 273 provides a ligand contact to CoA; that stretch reads GVGNV. E294 acts as the 5-glutamyl coenzyme A thioester intermediate in catalysis. CoA-binding residues include I364, N384, G388, and K408.

This sequence belongs to the acetyl-CoA hydrolase/transferase family. Homodimer.

It carries out the reaction succinyl-CoA + acetate = succinate + acetyl-CoA. The protein operates within metabolic intermediate biosynthesis; acetyl-CoA biosynthesis. Subject to competitive inhibition by coenzyme A (CoA). Its function is as follows. Utilizes succinyl-CoA to convert toxic acetate to acetyl-CoA and succinate. Required for growth on acetic acid and for resistance to high levels of acetic acid. Also has low activity with acetoacetate as substrate. The polypeptide is Succinyl-CoA:acetate CoA-transferase (Acetobacter aceti).